Consider the following 147-residue polypeptide: Hemoglobin subunit delta (147 aa).

The region spanning 3–147 is the Globin domain; the sequence is HLTADEKAAV…VAAALAHKYH (145 aa). Residues H64 and H93 each contribute to the heme b site.

This sequence belongs to the globin family. As to quaternary structure, heterotetramer of two delta chains and two alpha chains. As to expression, red blood cells.

The sequence is that of Hemoglobin subunit delta (HBD) from Carlito syrichta (Philippine tarsier).